Consider the following 500-residue polypeptide: Probable cytosol aminopeptidase (500 aa).

Mn(2+) contacts are provided by Lys268 and Asp273. The active site involves Lys280. Residues Asp291, Asp350, and Glu352 each contribute to the Mn(2+) site. Arg354 is an active-site residue.

This sequence belongs to the peptidase M17 family. Mn(2+) serves as cofactor.

The protein localises to the cytoplasm. It carries out the reaction Release of an N-terminal amino acid, Xaa-|-Yaa-, in which Xaa is preferably Leu, but may be other amino acids including Pro although not Arg or Lys, and Yaa may be Pro. Amino acid amides and methyl esters are also readily hydrolyzed, but rates on arylamides are exceedingly low.. It catalyses the reaction Release of an N-terminal amino acid, preferentially leucine, but not glutamic or aspartic acids.. In terms of biological role, presumably involved in the processing and regular turnover of intracellular proteins. Catalyzes the removal of unsubstituted N-terminal amino acids from various peptides. This is Probable cytosol aminopeptidase from Baumannia cicadellinicola subsp. Homalodisca coagulata.